The chain runs to 239 residues: MADKKAPAAGWPVANGEYVVGNPESCVAVVTLGSHGLDQAAIDAGAAISGPCHTENLGIEKVVANYISNPNIRFMVITGSEVQGHITGQCIKALYENGIGDDGGIIGAKGAIPFMENVGTEPVGRLQSQIVECIDLIDVEDTGKISDAIKNCISKDPGAFEEEPMVIELEGGAAAAGEESTSIKPTSPEMALLEARMRIVSEKMNEAAMIAKFNSGYYNGKIQGIAIGLFLSIVIFSLL.

Topologically, residues 1–215 (MADKKAPAAG…EAAMIAKFNS (215 aa)) are cytoplasmic. H85 is a 5-hydroxybenzimidazolylcob(I)amide binding site. Residues 216 to 238 (GYYNGKIQGIAIGLFLSIVIFSL) form a helical membrane-spanning segment. A topological domain (extracellular) is located at residue L239.

Belongs to the MtrA family. As to quaternary structure, the complex is composed of 8 subunits; MtrA, MtrB, MtrC, MtrD, MtrE, MtrF, MtrG and MtrH. The cofactor is 5-hydroxybenzimidazolylcob(I)amide.

The protein localises to the cell membrane. The enzyme catalyses 5-methyl-5,6,7,8-tetrahydromethanopterin + coenzyme M + 2 Na(+)(in) = 5,6,7,8-tetrahydromethanopterin + methyl-coenzyme M + 2 Na(+)(out). It functions in the pathway one-carbon metabolism; methanogenesis from CO(2); methyl-coenzyme M from 5,10-methylene-5,6,7,8-tetrahydromethanopterin: step 2/2. In terms of biological role, part of a complex that catalyzes the formation of methyl-coenzyme M and tetrahydromethanopterin from coenzyme M and methyl-tetrahydromethanopterin. This is an energy-conserving, sodium-ion translocating step. The polypeptide is Tetrahydromethanopterin S-methyltransferase subunit A (Methanococcus maripaludis (strain DSM 14266 / JCM 13030 / NBRC 101832 / S2 / LL)).